A 472-amino-acid chain; its full sequence is MAKKLEKIITRNENFADWYTSIVNNAKLIQYTDIKGMMVFQPNAWAIWEAIKNQIDLEFKKHGVRNLAMPTLIPLSEFQKEKDHIEGFAPELFMVNQIGDKKLDNPYAIRPTSEILFCNYFKNIVNSYNDLPIKNNQWCSVMRAEKTTRPFLRNAEFHWQELHAIFASEHEADEFAKTILDVYTDFVQNYLCIPVIKGLKTPWERFAGAQKTYTIEAMMQDGQALQSATSHYLGQFFAKAYDIKFQGQDNQMHYVHQMSAGLSTRIIGALIMVHADDQGLILPPDIAFNQIAILSIFANKNPQLLTISEQIRNELSDYRLFEDHSDKGVGYKLAQQEIEGTPICILVGVKELANQQVVLVRRDTHEKINVNLIDLKSTIKKLLLDIKTNIYQKAKKQLDESIVFVNSIEELKQVIAQNKMAKAFFDGSKEDDEQIKLLTNASTRCIFDETQSGQCFYTNKKTNKLTLFARAY.

Belongs to the class-II aminoacyl-tRNA synthetase family. ProS type 3 subfamily. Homodimer.

It is found in the cytoplasm. It catalyses the reaction tRNA(Pro) + L-proline + ATP = L-prolyl-tRNA(Pro) + AMP + diphosphate. Functionally, catalyzes the attachment of proline to tRNA(Pro) in a two-step reaction: proline is first activated by ATP to form Pro-AMP and then transferred to the acceptor end of tRNA(Pro). The chain is Proline--tRNA ligase from Ureaplasma urealyticum serovar 10 (strain ATCC 33699 / Western).